Reading from the N-terminus, the 297-residue chain is Bifunctional protein FolD (297 aa).

NADP(+)-binding positions include 166–168 (GRS), Ser191, and Ile232.

Belongs to the tetrahydrofolate dehydrogenase/cyclohydrolase family. In terms of assembly, homodimer.

It carries out the reaction (6R)-5,10-methylene-5,6,7,8-tetrahydrofolate + NADP(+) = (6R)-5,10-methenyltetrahydrofolate + NADPH. It catalyses the reaction (6R)-5,10-methenyltetrahydrofolate + H2O = (6R)-10-formyltetrahydrofolate + H(+). Its pathway is one-carbon metabolism; tetrahydrofolate interconversion. Functionally, catalyzes the oxidation of 5,10-methylenetetrahydrofolate to 5,10-methenyltetrahydrofolate and then the hydrolysis of 5,10-methenyltetrahydrofolate to 10-formyltetrahydrofolate. This chain is Bifunctional protein FolD, found in Phenylobacterium zucineum (strain HLK1).